A 544-amino-acid chain; its full sequence is Chaperonin GroEL 1 (544 aa).

ATP is bound by residues 30 to 33, lysine 51, 87 to 91, glycine 415, and aspartate 494; these read TLGP and DGTTT.

The protein belongs to the chaperonin (HSP60) family. Forms a cylinder of 14 subunits composed of two heptameric rings stacked back-to-back. Interacts with the co-chaperonin GroES.

It localises to the cytoplasm. The catalysed reaction is ATP + H2O + a folded polypeptide = ADP + phosphate + an unfolded polypeptide.. Its function is as follows. Together with its co-chaperonin GroES, plays an essential role in assisting protein folding. The GroEL-GroES system forms a nano-cage that allows encapsulation of the non-native substrate proteins and provides a physical environment optimized to promote and accelerate protein folding. The chain is Chaperonin GroEL 1 from Syntrophus aciditrophicus (strain SB).